A 496-amino-acid polypeptide reads, in one-letter code: Membrane-bound lytic murein transglycosylase F (496 aa).

Residues 1-31 (MPIFSTRVLTYLRCIFRLFIGLTLLLTLVGC) form the signal peptide. A non-LT domain region spans residues 32–271 (DFYTPSSQLE…KLDEKYFGHV (240 aa)). The segment at 273–496 (NFDFVDTRTF…AEVVKQITLR (224 aa)) is LT domain. E316 is a catalytic residue. The segment at 464–486 (HRREELDDDDSSEPPSAERPTVI) is disordered.

In the N-terminal section; belongs to the bacterial solute-binding protein 3 family. This sequence in the C-terminal section; belongs to the transglycosylase Slt family.

The protein resides in the cell outer membrane. The enzyme catalyses Exolytic cleavage of the (1-&gt;4)-beta-glycosidic linkage between N-acetylmuramic acid (MurNAc) and N-acetylglucosamine (GlcNAc) residues in peptidoglycan, from either the reducing or the non-reducing ends of the peptidoglycan chains, with concomitant formation of a 1,6-anhydrobond in the MurNAc residue.. Murein-degrading enzyme that degrades murein glycan strands and insoluble, high-molecular weight murein sacculi, with the concomitant formation of a 1,6-anhydromuramoyl product. Lytic transglycosylases (LTs) play an integral role in the metabolism of the peptidoglycan (PG) sacculus. Their lytic action creates space within the PG sacculus to allow for its expansion as well as for the insertion of various structures such as secretion systems and flagella. The protein is Membrane-bound lytic murein transglycosylase F of Aeromonas hydrophila subsp. hydrophila (strain ATCC 7966 / DSM 30187 / BCRC 13018 / CCUG 14551 / JCM 1027 / KCTC 2358 / NCIMB 9240 / NCTC 8049).